A 92-amino-acid chain; its full sequence is Large ribosomal subunit protein eL31 (92 aa).

It belongs to the eukaryotic ribosomal protein eL31 family.

The protein is Large ribosomal subunit protein eL31 of Pyrobaculum arsenaticum (strain DSM 13514 / JCM 11321 / PZ6).